The chain runs to 448 residues: Glutamyl-tRNA reductase (448 aa).

Substrate-binding positions include 49–52, Ser-109, 114–116, and Gln-120; these read TCNR and ETQ. Cys-50 acts as the Nucleophile in catalysis. 189–194 is a binding site for NADP(+); that stretch reads GAGEMS.

It belongs to the glutamyl-tRNA reductase family. In terms of assembly, homodimer.

It catalyses the reaction (S)-4-amino-5-oxopentanoate + tRNA(Glu) + NADP(+) = L-glutamyl-tRNA(Glu) + NADPH + H(+). It participates in porphyrin-containing compound metabolism; protoporphyrin-IX biosynthesis; 5-aminolevulinate from L-glutamyl-tRNA(Glu): step 1/2. Catalyzes the NADPH-dependent reduction of glutamyl-tRNA(Glu) to glutamate 1-semialdehyde (GSA). This Staphylococcus aureus (strain MRSA252) protein is Glutamyl-tRNA reductase.